Consider the following 652-residue polypeptide: Forkhead box protein O1-A (652 aa).

Disordered regions lie at residues 1–57 (MADA…EPSS), 208–277 (SSWW…NSHS), and 359–406 (NLLS…QQTQ). Over residues 41-57 (DSNTSSPAPSVKQEPSS) the composition is skewed to polar residues. The segment at residues 134-228 (WGNMSYADLI…KSGKSPRRRA (95 aa)) is a DNA-binding region (fork-head). Over residues 238-249 (AKSRGRAAKKKL) the composition is skewed to basic residues. Residues 362–397 (SPKNPSTGGPGSGSNQSSPSSLMQASPGYSPYSSPG) are compositionally biased toward low complexity.

It is found in the cytoplasm. Its subcellular location is the nucleus. Its function is as follows. Transcription factor that regulates metabolic homeostasis in response to oxidative stress. Binds to the consensus sequence 5'-TT[G/A]TTTTG-3' and the related Daf-16 family binding element (DBE) with consensus sequence 5'-TT[G/A]TTTAC-3'. Main regulator of redox balance and osteoblast numbers and controls bone mass. Orchestrates the endocrine function of the skeleton in regulating glucose metabolism. May be involved in regulating cellular homeostasis in the eye. May act as a positive regulator of apoptosis in cardiac smooth muscle cells as a result of its transcriptional activation of pro-apoptotic genes. The sequence is that of Forkhead box protein O1-A (foxo1a) from Danio rerio (Zebrafish).